Consider the following 562-residue polypeptide: Efflux pump apf11 (562 aa).

Composition is skewed to low complexity over residues methionine 1–alanine 10 and threonine 18–threonine 30. The interval methionine 1–proline 36 is disordered. The N-linked (GlcNAc...) asparagine glycan is linked to asparagine 22. The next 8 membrane-spanning stretches (helical) occupy residues leucine 46 to alanine 66, alanine 83 to isoleucine 103, lysine 110 to alanine 130, alanine 141 to threonine 161, valine 169 to glycine 189, tryptophan 200 to leucine 220, glycine 249 to threonine 269, and isoleucine 278 to tryptophan 298. Asparagine 312 is a glycosylation site (N-linked (GlcNAc...) asparagine). A run of 6 helical transmembrane segments spans residues methionine 317–proline 337, leucine 356–valine 376, phenylalanine 382–isoleucine 404, isoleucine 414–alanine 434, valine 447–leucine 467, and phenylalanine 516–isoleucine 536.

The protein belongs to the major facilitator superfamily. TCR/Tet family.

It localises to the membrane. It functions in the pathway secondary metabolite biosynthesis. Efflux pump; part of the gene cluster that mediates the biosynthesis of the cyclic tetrapeptide apicidin F (APF). The sequence is that of Efflux pump apf11 (apf11) from Gibberella fujikuroi (strain CBS 195.34 / IMI 58289 / NRRL A-6831) (Bakanae and foot rot disease fungus).